The following is a 234-amino-acid chain: Uridylate kinase (234 aa).

9–12 (KLSG) is an ATP binding site. Glycine 51 is a binding site for UMP. Residues glycine 52 and arginine 56 each coordinate ATP. Residues aspartate 71 and 132–139 (CGNPFFTT) contribute to the UMP site. Threonine 159, tyrosine 165, and aspartate 168 together coordinate ATP.

It belongs to the UMP kinase family. As to quaternary structure, homohexamer.

Its subcellular location is the cytoplasm. It catalyses the reaction UMP + ATP = UDP + ADP. Its pathway is pyrimidine metabolism; CTP biosynthesis via de novo pathway; UDP from UMP (UMPK route): step 1/1. Its activity is regulated as follows. Inhibited by UTP. Catalyzes the reversible phosphorylation of UMP to UDP. In Prochlorococcus marinus (strain MIT 9301), this protein is Uridylate kinase.